Reading from the N-terminus, the 289-residue chain is BTB/POZ domain-containing protein KCTD7 (289 aa).

The span at 1 to 10 shows a compositional bias: polar residues; the sequence is MVVVTGQSKG. The interval 1 to 35 is disordered; sequence MVVVTGQSKGSGDPDEAMSSSDAEDDFQEPATPTA. Positions 51–149 constitute a BTB domain; it reads EVVPLNVGGM…HLEDVQPLKG (99 aa).

The protein resides in the cell membrane. Its subcellular location is the cytoplasm. It localises to the cytosol. Its function is as follows. May be involved in the control of excitability of cortical neurons. This chain is BTB/POZ domain-containing protein KCTD7 (KCTD7), found in Gallus gallus (Chicken).